The sequence spans 290 residues: Ribosomal RNA small subunit methyltransferase A (290 aa).

6 residues coordinate S-adenosyl-L-methionine: N28, L30, G55, E76, D102, and N126.

It belongs to the class I-like SAM-binding methyltransferase superfamily. rRNA adenine N(6)-methyltransferase family. RsmA subfamily.

The protein localises to the cytoplasm. The catalysed reaction is adenosine(1518)/adenosine(1519) in 16S rRNA + 4 S-adenosyl-L-methionine = N(6)-dimethyladenosine(1518)/N(6)-dimethyladenosine(1519) in 16S rRNA + 4 S-adenosyl-L-homocysteine + 4 H(+). Functionally, specifically dimethylates two adjacent adenosines (A1518 and A1519) in the loop of a conserved hairpin near the 3'-end of 16S rRNA in the 30S particle. May play a critical role in biogenesis of 30S subunits. The polypeptide is Ribosomal RNA small subunit methyltransferase A (Lachnoclostridium phytofermentans (strain ATCC 700394 / DSM 18823 / ISDg) (Clostridium phytofermentans)).